Reading from the N-terminus, the 525-residue chain is Glutamate--cysteine ligase (525 aa).

It belongs to the glutamate--cysteine ligase type 1 family. Type 1 subfamily.

It catalyses the reaction L-cysteine + L-glutamate + ATP = gamma-L-glutamyl-L-cysteine + ADP + phosphate + H(+). It participates in sulfur metabolism; glutathione biosynthesis; glutathione from L-cysteine and L-glutamate: step 1/2. This Hahella chejuensis (strain KCTC 2396) protein is Glutamate--cysteine ligase.